Consider the following 144-residue polypeptide: Large ribosomal subunit protein uL15 (144 aa).

Positions 1-51 (MQLNTLSPAQGEKKSRKRVGRGIGSGIGKTCGSGHKGQKSRSGGFNKIGFE) are disordered. Over residues 21–35 (RGIGSGIGKTCGSGH) the composition is skewed to gly residues.

This sequence belongs to the universal ribosomal protein uL15 family. Part of the 50S ribosomal subunit.

In terms of biological role, binds to the 23S rRNA. The chain is Large ribosomal subunit protein uL15 from Vesicomyosocius okutanii subsp. Calyptogena okutanii (strain HA).